The following is a 500-amino-acid chain: Glycerol kinase (500 aa).

Residue Thr-13 participates in ADP binding. Positions 13, 14, and 15 each coordinate ATP. Thr-13 is a binding site for sn-glycerol 3-phosphate. Arg-17 provides a ligand contact to ADP. Residues Arg-83, Glu-84, Tyr-135, and Asp-244 each contribute to the sn-glycerol 3-phosphate site. Residues Arg-83, Glu-84, Tyr-135, Asp-244, and Gln-245 each contribute to the glycerol site. Residues Thr-266 and Gly-309 each coordinate ADP. Positions 266, 309, 313, and 410 each coordinate ATP. 2 residues coordinate ADP: Gly-410 and Asn-414.

This sequence belongs to the FGGY kinase family.

It carries out the reaction glycerol + ATP = sn-glycerol 3-phosphate + ADP + H(+). Its pathway is polyol metabolism; glycerol degradation via glycerol kinase pathway; sn-glycerol 3-phosphate from glycerol: step 1/1. Inhibited by fructose 1,6-bisphosphate (FBP). Key enzyme in the regulation of glycerol uptake and metabolism. Catalyzes the phosphorylation of glycerol to yield sn-glycerol 3-phosphate. The sequence is that of Glycerol kinase from Burkholderia pseudomallei (strain K96243).